Here is a 368-residue protein sequence, read N- to C-terminus: Chaperone protein DnaJ (368 aa).

The region spanning 5–75 (DFYKILGVEK…TKRKQYDKFG (71 aa)) is the J domain. The CR-type zinc finger occupies 139–222 (GKEISQKLTK…CRGKTIVETK (84 aa)). Zn(2+)-binding residues include Cys152, Cys155, Cys169, Cys172, Cys196, Cys199, Cys210, and Cys213. CXXCXGXG motif repeat units follow at residues 152–159 (CDNCKGSG), 169–176 (CYNCQGRG), 196–203 (CSVCLGSG), and 210–217 (CKKCRGKT).

It belongs to the DnaJ family. In terms of assembly, homodimer. Zn(2+) is required as a cofactor.

It is found in the cytoplasm. Functionally, participates actively in the response to hyperosmotic and heat shock by preventing the aggregation of stress-denatured proteins and by disaggregating proteins, also in an autonomous, DnaK-independent fashion. Unfolded proteins bind initially to DnaJ; upon interaction with the DnaJ-bound protein, DnaK hydrolyzes its bound ATP, resulting in the formation of a stable complex. GrpE releases ADP from DnaK; ATP binding to DnaK triggers the release of the substrate protein, thus completing the reaction cycle. Several rounds of ATP-dependent interactions between DnaJ, DnaK and GrpE are required for fully efficient folding. Also involved, together with DnaK and GrpE, in the DNA replication of plasmids through activation of initiation proteins. The sequence is that of Chaperone protein DnaJ from Mesomycoplasma hyopneumoniae (strain 232) (Mycoplasma hyopneumoniae).